The primary structure comprises 494 residues: Serine/threonine-protein kinase PBL13 (494 aa).

A lipid anchor (S-palmitoyl cysteine) is attached at Cys-4. Position 65 is a phosphothreonine (Thr-65). Residues 76 to 356 enclose the Protein kinase domain; sequence FSSSNFLGEG…STVVSVLQDI (281 aa). ATP contacts are provided by residues 82-90 and Lys-111; that span reads LGEGGFGPV. Tyr-156 carries the phosphotyrosine modification. The active-site Proton acceptor is Asp-206. Position 210 is a phosphoserine (Ser-210). The residue at position 240 (Ser-240) is a Phosphoserine; by autocatalysis. Phosphothreonine occurs at positions 241 and 246. Tyr-254 is modified (phosphotyrosine). Phosphoserine; by autocatalysis is present on Ser-321. Thr-323 and Thr-383 each carry phosphothreonine; by autocatalysis. Ser-384 is modified (phosphoserine; by autocatalysis). Phosphothreonine; by autocatalysis is present on residues Thr-395, Thr-398, Thr-406, Thr-413, Thr-421, and Thr-428. The residue at position 429 (Ser-429) is a Phosphoserine; by autocatalysis. The segment at 434-471 is disordered; the sequence is DKTRREVKETSLQNFDKPRNVSTTDNHQKFRSPAHTAR. Thr-443 bears the Phosphothreonine; by autocatalysis mark. The span at 443–458 shows a compositional bias: polar residues; sequence TSLQNFDKPRNVSTTD. Phosphoserine; by autocatalysis is present on residues Ser-444 and Ser-455. At Thr-456 the chain carries Phosphothreonine; by autocatalysis. Positions 462–471 are enriched in basic residues; sequence KFRSPAHTAR. A Phosphotyrosine; by autocatalysis modification is found at Tyr-481.

It belongs to the protein kinase superfamily. Ser/Thr protein kinase family. In terms of assembly, interacts with RBHOD. Interaction is disrupted by flagellin-induced immune signaling.

Its subcellular location is the cell membrane. The enzyme catalyses L-seryl-[protein] + ATP = O-phospho-L-seryl-[protein] + ADP + H(+). It carries out the reaction L-threonyl-[protein] + ATP = O-phospho-L-threonyl-[protein] + ADP + H(+). Its function is as follows. Involved in defense responses. Acts as a negative regulator of plant immune responses. The chain is Serine/threonine-protein kinase PBL13 from Arabidopsis thaliana (Mouse-ear cress).